A 729-amino-acid polypeptide reads, in one-letter code: Fatty acid oxidation complex subunit alpha (729 aa).

An enoyl-CoA hydratase/isomerase region spans residues 1–189 (MLYKGDTLYL…KIGLVDGVVK (189 aa)). Substrate is bound at residue aspartate 296. The 3-hydroxyacyl-CoA dehydrogenase stretch occupies residues 311 to 729 (ETPKQAAVLG…ARAVGDLKTA (419 aa)). Residues methionine 324, aspartate 343, 400–402 (VVE), lysine 407, and serine 429 contribute to the NAD(+) site. Catalysis depends on histidine 450, which acts as the For 3-hydroxyacyl-CoA dehydrogenase activity. Position 453 (asparagine 453) interacts with NAD(+). Residues asparagine 500 and tyrosine 660 each coordinate substrate.

This sequence in the N-terminal section; belongs to the enoyl-CoA hydratase/isomerase family. It in the C-terminal section; belongs to the 3-hydroxyacyl-CoA dehydrogenase family. In terms of assembly, heterotetramer of two alpha chains (FadB) and two beta chains (FadA).

The enzyme catalyses a (3S)-3-hydroxyacyl-CoA + NAD(+) = a 3-oxoacyl-CoA + NADH + H(+). It carries out the reaction a (3S)-3-hydroxyacyl-CoA = a (2E)-enoyl-CoA + H2O. The catalysed reaction is a 4-saturated-(3S)-3-hydroxyacyl-CoA = a (3E)-enoyl-CoA + H2O. It catalyses the reaction (3S)-3-hydroxybutanoyl-CoA = (3R)-3-hydroxybutanoyl-CoA. The enzyme catalyses a (3Z)-enoyl-CoA = a 4-saturated (2E)-enoyl-CoA. It carries out the reaction a (3E)-enoyl-CoA = a 4-saturated (2E)-enoyl-CoA. It participates in lipid metabolism; fatty acid beta-oxidation. Involved in the aerobic and anaerobic degradation of long-chain fatty acids via beta-oxidation cycle. Catalyzes the formation of 3-oxoacyl-CoA from enoyl-CoA via L-3-hydroxyacyl-CoA. It can also use D-3-hydroxyacyl-CoA and cis-3-enoyl-CoA as substrate. The protein is Fatty acid oxidation complex subunit alpha of Escherichia fergusonii (strain ATCC 35469 / DSM 13698 / CCUG 18766 / IAM 14443 / JCM 21226 / LMG 7866 / NBRC 102419 / NCTC 12128 / CDC 0568-73).